A 610-amino-acid polypeptide reads, in one-letter code: E3 ubiquitin-protein ligase hrd-1 (610 aa).

The N-terminal stretch at 1–23 is a signal peptide; that stretch reads MRVSAGLMIGGSCVATAATILNA. Residues 24–41 are Lumenal-facing; the sequence is FLINKQFYPSIVYLSKSN. The chain crosses the membrane as a helical span at residues 42–62; it reads ASMAVIYVQGIVLVYLMFQLL. Topologically, residues 63-99 are cytoplasmic; the sequence is KSILFGDLRAAEAEHLSERTWHAVLETCLAFTVFRDD. Residues 100 to 120 form a helical membrane-spanning segment; it reads FSAIFVMQFIGLLFIKCFHWL. Residues 121–144 lie on the Lumenal side of the membrane; the sequence is ADDRVDMMERSPVITLRFHLRMMT. Residues 145 to 165 form a helical membrane-spanning segment; that stretch reads VLAALGFADSYFVSSAYFTTI. Residues 166-170 lie on the Cytoplasmic side of the membrane; sequence TRGAS. Residues 171–191 form a helical membrane-spanning segment; it reads AQIVFGFEYAILLALVLHVTI. At 192–215 the chain is on the lumenal side; the sequence is KYLLHMHDLRNPQSWDNKAVYLLY. Residues 216 to 236 form a helical membrane-spanning segment; it reads AELFINLIRCLLYGFFAVVML. The Cytoplasmic portion of the chain corresponds to 237–610; the sequence is RVHTFPLFSV…ARLLGENANQ (374 aa). Residues 292 to 333 form an RING-type; atypical zinc finger; it reads CIICREEMTVDASPKRLPCSHVFHAHCLRSWFQRQQTCPTCR. Disordered regions lie at residues 386–408, 452–480, and 521–610; these read QPAG…GPFP, VNTT…LRRM, and RPVV…NANQ. Polar residues predominate over residues 452–474; it reads VNTTQGTSSETPPVNPSYSQLST. Residues 560–589 show a composition bias toward low complexity; it reads TESPSTSSTAPSTSSPVTASSTPTTSSTRT.

It belongs to the HRD1 family. Homodimer.

The protein localises to the endoplasmic reticulum membrane. It carries out the reaction S-ubiquitinyl-[E2 ubiquitin-conjugating enzyme]-L-cysteine + [acceptor protein]-L-lysine = [E2 ubiquitin-conjugating enzyme]-L-cysteine + N(6)-ubiquitinyl-[acceptor protein]-L-lysine.. It participates in protein modification; protein ubiquitination. In terms of biological role, acts as an E3 ubiquitin-protein ligase which accepts ubiquitin specifically from endoplasmic reticulum-associated ubc-7 E2 ligase and transfers it to substrates, promoting their degradation. Component of the endoplasmic reticulum quality control (ERQC) system, which is also called the ER-associated degradation (ERAD) system, involved in ubiquitin-dependent degradation of misfolded endoplasmic reticulum proteins. Also promotes the degradation of normal but naturally short-lived proteins. Protects cells from ER stress-induced apoptosis. Thought to play a role together with hsp-3 in developmental growth and function of intestinal cells and to play a role together with hsp-4 in gonad formation. Plays a key role in the degradation of the potassium channel slo-1, perhaps acting directly, in targeting slo-1 to the ER-associated degradation pathway (ERAD), and also indirectly, via activation of the transcription factor skn-1, which mediates proteasomal homeostasis. The sequence is that of E3 ubiquitin-protein ligase hrd-1 (sel-11) from Caenorhabditis elegans.